A 489-amino-acid chain; its full sequence is MTFRHCVAVDLGASSGRVMLARYDSKHRTLTLREIHRFVNCLQKTDGFDTWDIDSLEKDIRLGLKKVCNEGILIDSIGIDTWGVDYVLLDKQGQRVGLPVSYRDNRTTGIMPQALVQIGKSEIYRRSGIQFLPFNTIYQLRALTKQQPELTAQVAHALLMPDYFSYRLTGEMNWEYTNATTTQLVNINTDDWDDTLLAWTGAKKGWFGRPSHPGNVIGDWICPQGNRIPVVAVASHDTASAVIASPLANKHSAYLSSGTWSLMGFESKMPYTTDEALAANITNEGGAEGRYRVLKNIMGLWLLQRVLKERRITDLPALIAQTEALPACRFLINPNDDRFINPDDMRAEIQAACRETDQPVPVSDAELARCIFDSLALLYADILHELANLRGEKFTQLHIVGGGCQNALLNQLCADACGIRVMAGPVEASTLGNIGIQLMTLDELNNVDDFRQVISANYDLTTYIPNPDSEIARHVAQFQPKRQTKELCA.

An ATP-binding site is contributed by 13–17 (ASSGR). Residues Cys-68 and Cys-222 are joined by a disulfide bond. Residues Gly-83 and 236 to 238 (HDT) contribute to the substrate site. Asp-237 functions as the Proton acceptor in the catalytic mechanism. Thr-259 contributes to the ATP binding site. Asn-296 contributes to the substrate binding site. Gln-304 is an ATP binding site. Cys-353 and Cys-370 are disulfide-bonded. Gly-402 provides a ligand contact to ATP. The cysteines at positions 413 and 417 are disulfide-linked.

It belongs to the rhamnulokinase family. It depends on Mg(2+) as a cofactor.

The enzyme catalyses L-rhamnulose + ATP = L-rhamnulose 1-phosphate + ADP + H(+). It participates in carbohydrate degradation; L-rhamnose degradation; glycerone phosphate from L-rhamnose: step 2/3. In terms of biological role, involved in the catabolism of L-rhamnose (6-deoxy-L-mannose). Catalyzes the transfer of the gamma-phosphate group from ATP to the 1-hydroxyl group of L-rhamnulose to yield L-rhamnulose 1-phosphate. The chain is Rhamnulokinase from Salmonella agona (strain SL483).